Consider the following 350-residue polypeptide: m7GpppX diphosphatase (350 aa).

S2 carries the N-acetylserine modification. S60 carries the phosphoserine modification. T66 bears the Phosphothreonine mark. T66 is subject to Phosphothreonine; by YAK1. Y70 is subject to Phosphotyrosine. Position 120 is a phosphothreonine (T120). Substrate is bound by residues E171, K196, and H259–H270. The Histidine triad motif signature appears at H266–H270. H268 functions as the Nucleophile in the catalytic mechanism.

This sequence belongs to the HIT family. As to quaternary structure, homodimer. Forms heterodimer with DCS2; the interaction inhibits the DCS1 scavenger decapping activity during post-diauxic growth. Post-translationally, phosphorylated. Phosphorylation occurs upon glucose deprivation.

It localises to the cytoplasm. The protein resides in the perinuclear region. Its subcellular location is the P-body. The catalysed reaction is a 5'-end (N(7)-methyl 5'-triphosphoguanosine)-ribonucleoside in mRNA + H2O = N(7)-methyl-GMP + a 5'-end diphospho-ribonucleoside in mRNA + 2 H(+). The hydrolytic product 7-methylguanosine diphosphate (m7GDP) efficiently inhibits the decapping scavenger activity and acts as a competitive inhibitor in vitro. Functionally, decapping scavenger enzyme that catalyzes the cleavage of a residual cap structure following the degradation of mRNAs by the 3'-&gt;5' exosome-mediated mRNA decay pathway. Hydrolyzes cap analog structures like 7-methylguanosine nucleoside triphosphate (m7GpppG) and tri-methyl guanosine nucleoside triphosphate (m3(2,2,7)GpppG) with up to 10 nucleotide substrates (small capped oligoribonucleotides) and specifically releases 5'-phosphorylated RNA fragments and 7-methylguanosine monophosphate (m7GMP) or tri-methyl guanosine nucleoside monophosphate (m3(2,2,7)GMP), respectively. Does not hydrolyze unmethylated cap analog (GpppG) and shows no decapping activity on intact m7GpppG-capped mRNA molecules longer than 25 nucleotides. Does not hydrolyze 7-methylguanosine diphosphate (m7GDP) and tri-methylguanosine diphosphate (m3(2,2,7)GDP) to (m(7)GMP) and m3(2,2,7)GMP, respectively. May also play a role in the 5'-&gt;3 mRNA decay pathway; m7GDP, the downstream product released by the 5'-&gt;3' mRNA mediated decapping activity, may be also converted by DCS1 to m7GMP. Binds to m7GpppG and strongly to m7GDP. May also regulate the 5'-&gt;3' exoribonucleolytic mRNA decay pathway in a cap-independent manner. Negatively regulates trehalase activity. The protein is m7GpppX diphosphatase of Saccharomyces cerevisiae (strain ATCC 204508 / S288c) (Baker's yeast).